The following is a 202-amino-acid chain: Nucleoside triphosphate pyrophosphatase (202 aa).

Catalysis depends on D79, which acts as the Proton acceptor.

Belongs to the Maf family. It depends on a divalent metal cation as a cofactor.

It localises to the cytoplasm. The catalysed reaction is a ribonucleoside 5'-triphosphate + H2O = a ribonucleoside 5'-phosphate + diphosphate + H(+). It catalyses the reaction a 2'-deoxyribonucleoside 5'-triphosphate + H2O = a 2'-deoxyribonucleoside 5'-phosphate + diphosphate + H(+). Nucleoside triphosphate pyrophosphatase. May have a dual role in cell division arrest and in preventing the incorporation of modified nucleotides into cellular nucleic acids. This Nitrobacter hamburgensis (strain DSM 10229 / NCIMB 13809 / X14) protein is Nucleoside triphosphate pyrophosphatase.